The following is a 179-amino-acid chain: Large ribosomal subunit protein uL10 (179 aa).

The protein belongs to the universal ribosomal protein uL10 family. As to quaternary structure, part of the ribosomal stalk of the 50S ribosomal subunit. The N-terminus interacts with L11 and the large rRNA to form the base of the stalk. The C-terminus forms an elongated spine to which L12 dimers bind in a sequential fashion forming a multimeric L10(L12)X complex.

Functionally, forms part of the ribosomal stalk, playing a central role in the interaction of the ribosome with GTP-bound translation factors. The protein is Large ribosomal subunit protein uL10 of Thermotoga neapolitana (strain ATCC 49049 / DSM 4359 / NBRC 107923 / NS-E).